Here is a 344-residue protein sequence, read N- to C-terminus: uncharacterized protein (344 aa).

Topologically, residues 1-98 (MIDFVKSRDT…NNDEIGIWNY (98 aa)) are cytoplasmic. The chain crosses the membrane as a helical span at residues 99–119 (ISVAEMGGVLLFLSYWIWTCL). A topological domain (lumenal) is located at residue His120. A helical transmembrane segment spans residues 121–141 (FSKIIFPAQKVICLYIFLFAL). The Cytoplasmic segment spans residues 142–169 (NQTLQECIEEYVFSSECIKYRQFYSVYE). The helical transmembrane segment at 170-192 (IIDFLRTNFYRLFVIYCALGFGI) threads the bilayer. At 193–198 (TRTVPK) the chain is on the lumenal side. Residues 199-219 (YLMIKGISIVIALCSVYWISL) traverse the membrane as a helical segment. Topologically, residues 220-222 (YKD) are cytoplasmic. Residues 223–243 (VYVVSEIFDMIQYEVFPAIWV) traverse the membrane as a helical segment. The Lumenal segment spans residues 244–273 (YSICHLLKQCTSVTTYENASKARFFRRMLN). The helical transmembrane segment at 274-294 (AFIFIFCASPMLHYLSNIIFG) threads the bilayer. At 295–344 (NFDYRLSVIIGDLFTFMEKIAFPCYIMFPTHNEALAYNRNVAEEAQEKMI) the chain is on the cytoplasmic side.

It is found in the endoplasmic reticulum membrane. This is an uncharacterized protein from Schizosaccharomyces pombe (strain 972 / ATCC 24843) (Fission yeast).